The sequence spans 378 residues: mRNA cap guanine-N(7) methyltransferase (378 aa).

Positions 24–331 (SRIFFMRNMN…MYLVFGFRKK (308 aa)) constitute an mRNA cap 0 methyltransferase domain. 33–34 (NN) is an mRNA binding site. S-adenosyl-L-methionine contacts are provided by Lys37, Ala62, Asp84, Asp116, Gln138, and Tyr143. 2 stretches are compositionally biased toward basic and acidic residues: residues 335–347 (EKNL…EIKK) and 356–378 (DTDK…PSHC). Residues 335–378 (EKNLESEAPEIKKVTPVPLNEDTDKTAEKNEERIEEKEENPSHC) are disordered.

Belongs to the class I-like SAM-binding methyltransferase superfamily. mRNA cap 0 methyltransferase family.

It is found in the nucleus. The catalysed reaction is a 5'-end (5'-triphosphoguanosine)-ribonucleoside in mRNA + S-adenosyl-L-methionine = a 5'-end (N(7)-methyl 5'-triphosphoguanosine)-ribonucleoside in mRNA + S-adenosyl-L-homocysteine. Its function is as follows. mRNA-capping methyltransferase that methylates the N7 position of the added guanosine to the 5'-cap structure of mRNAs. Binds RNA containing 5'-terminal GpppC. The protein is mRNA cap guanine-N(7) methyltransferase of Caenorhabditis briggsae.